The following is a 140-amino-acid chain: Methylglyoxal synthase (140 aa).

The region spanning 1–140 (MNIALIAHDE…KERQEKEGTP (140 aa)) is the MGS-like domain. Substrate contacts are provided by residues histidine 8, lysine 12, 34-37 (TGTT), and 54-55 (SG). Aspartate 60 serves as the catalytic Proton donor/acceptor. Substrate is bound at residue histidine 87.

This sequence belongs to the methylglyoxal synthase family.

The catalysed reaction is dihydroxyacetone phosphate = methylglyoxal + phosphate. In terms of biological role, catalyzes the formation of methylglyoxal from dihydroxyacetone phosphate. The sequence is that of Methylglyoxal synthase from Oceanobacillus iheyensis (strain DSM 14371 / CIP 107618 / JCM 11309 / KCTC 3954 / HTE831).